The chain runs to 284 residues: Shikimate dehydrogenase (NADP(+)) (284 aa).

Residues 20–22 (SIS) and Ser67 each bind shikimate. The active-site Proton acceptor is Lys71. Position 83 (Asp83) interacts with NADP(+). 2 residues coordinate shikimate: Asn92 and Asp107. Residues 129 to 133 (GAGGA) and Ile227 contribute to the NADP(+) site. Residue Tyr229 coordinates shikimate. NADP(+) is bound at residue Gly250.

Belongs to the shikimate dehydrogenase family. Homodimer.

It catalyses the reaction shikimate + NADP(+) = 3-dehydroshikimate + NADPH + H(+). It functions in the pathway metabolic intermediate biosynthesis; chorismate biosynthesis; chorismate from D-erythrose 4-phosphate and phosphoenolpyruvate: step 4/7. Involved in the biosynthesis of the chorismate, which leads to the biosynthesis of aromatic amino acids. Catalyzes the reversible NADPH linked reduction of 3-dehydroshikimate (DHSA) to yield shikimate (SA). This Streptococcus pneumoniae (strain CGSP14) protein is Shikimate dehydrogenase (NADP(+)).